Here is a 505-residue protein sequence, read N- to C-terminus: ATP synthase subunit alpha (505 aa).

171 to 178 (GDRQTGKT) serves as a coordination point for ATP.

Belongs to the ATPase alpha/beta chains family. F-type ATPases have 2 components, CF(1) - the catalytic core - and CF(0) - the membrane proton channel. CF(1) has five subunits: alpha(3), beta(3), gamma(1), delta(1), epsilon(1). CF(0) has three main subunits: a(1), b(2) and c(9-12). The alpha and beta chains form an alternating ring which encloses part of the gamma chain. CF(1) is attached to CF(0) by a central stalk formed by the gamma and epsilon chains, while a peripheral stalk is formed by the delta and b chains.

The protein localises to the cell inner membrane. It catalyses the reaction ATP + H2O + 4 H(+)(in) = ADP + phosphate + 5 H(+)(out). Functionally, produces ATP from ADP in the presence of a proton gradient across the membrane. The alpha chain is a regulatory subunit. This Campylobacter curvus (strain 525.92) protein is ATP synthase subunit alpha.